A 66-amino-acid polypeptide reads, in one-letter code: Metallothionein (66 aa).

Residue S1 is modified to N-acetylserine. The Cd(2+) site is built by C9, C13, C18, C20, C24, C26, C30, C32, C35, C38, C40, C45, C47, C51, C57, C59, C63, and C65.

Belongs to the metallothionein superfamily. Type 2 family.

Its function is as follows. The metallothioneins are involved in the cellular sequestration of toxic metal ions and regulation of essential trace elements. The sequence is that of Metallothionein from Arianta arbustorum (Land snail).